The following is an 85-amino-acid chain: MKRGALEPSDFQNCLKLFSQPFPQILDQCASNLQTLRHTQGPMQHLELLTLLFDLAGAECLKEVTKVQCTKKDADPVLTNVILPK.

The protein belongs to the herpesviridae UL91 family.

This is an uncharacterized protein from Alcelaphine herpesvirus 1 (strain C500) (AlHV-1).